The chain runs to 219 residues: MGVPVVADSWHSFPHTSILPEEPTMFAGPPIGAVCPFAGQVAPISSSVNTIWSNTPCASSGEAAGTNAEAPISYVEAQGWMLCDGRYLRAAVYPELYAVLGGLYGERNSTADLEFRIPDYRGLFLRGFDAGGGMDPDAKRRLDPTGNNVANVVGSLQCDALQVHAHPYEITTPAGISQQGNAAGTSISSKSTGSPENPARTALETRPKNVAVNYLIKFR.

The segment covering 174 to 195 (AGISQQGNAAGTSISSKSTGSP) has biased composition (polar residues). A disordered region spans residues 174–201 (AGISQQGNAAGTSISSKSTGSPENPART).

Functionally, may be involved in plant-microbe interaction. The polypeptide is Protein RhiB (rhiB) (Rhizobium leguminosarum bv. viciae).